Consider the following 166-residue polypeptide: MRRAVCPGSFDPIHNGHLEVIARAAGLFDEVIVAVSTNYAKKYRFSLEDRMEMARETLASLRGIIVEPMGEGLLAEYCRHRGVSAIVKGLRSSSDFDYELPMATMNRQLTGVETVFLPAEAHYVHLSSTLIKEVNVLGGDISEYVPKSVLKRLLAGEPPTEPSRKG.

Residue serine 9 coordinates substrate. ATP contacts are provided by residues serine 9–phenylalanine 10 and histidine 17. Substrate is bound by residues lysine 41, leucine 74, and lysine 88. ATP-binding positions include glycine 89–arginine 91, glutamate 99, and tyrosine 123–threonine 129.

Belongs to the bacterial CoaD family. In terms of assembly, homohexamer. Mg(2+) is required as a cofactor.

Its subcellular location is the cytoplasm. It catalyses the reaction (R)-4'-phosphopantetheine + ATP + H(+) = 3'-dephospho-CoA + diphosphate. Its pathway is cofactor biosynthesis; coenzyme A biosynthesis; CoA from (R)-pantothenate: step 4/5. Functionally, reversibly transfers an adenylyl group from ATP to 4'-phosphopantetheine, yielding dephospho-CoA (dPCoA) and pyrophosphate. The sequence is that of Phosphopantetheine adenylyltransferase from Paenarthrobacter aurescens (strain TC1).